The following is a 76-amino-acid chain: MKADIHPQYHLIKVVMTDGTEFQTRSTYGEEGATLNLDIDPKTHPAWTGGTQQLLDRGGRLSRFNSRFGNLSFGKK.

The protein belongs to the bacterial ribosomal protein bL31 family. Type A subfamily. As to quaternary structure, part of the 50S ribosomal subunit.

Functionally, binds the 23S rRNA. The polypeptide is Large ribosomal subunit protein bL31 (Beijerinckia indica subsp. indica (strain ATCC 9039 / DSM 1715 / NCIMB 8712)).